The following is a 95-amino-acid chain: Aspartyl/glutamyl-tRNA(Asn/Gln) amidotransferase subunit C (95 aa).

Belongs to the GatC family. As to quaternary structure, heterotrimer of A, B and C subunits.

The catalysed reaction is L-glutamyl-tRNA(Gln) + L-glutamine + ATP + H2O = L-glutaminyl-tRNA(Gln) + L-glutamate + ADP + phosphate + H(+). It carries out the reaction L-aspartyl-tRNA(Asn) + L-glutamine + ATP + H2O = L-asparaginyl-tRNA(Asn) + L-glutamate + ADP + phosphate + 2 H(+). Allows the formation of correctly charged Asn-tRNA(Asn) or Gln-tRNA(Gln) through the transamidation of misacylated Asp-tRNA(Asn) or Glu-tRNA(Gln) in organisms which lack either or both of asparaginyl-tRNA or glutaminyl-tRNA synthetases. The reaction takes place in the presence of glutamine and ATP through an activated phospho-Asp-tRNA(Asn) or phospho-Glu-tRNA(Gln). This Campylobacter concisus (strain 13826) protein is Aspartyl/glutamyl-tRNA(Asn/Gln) amidotransferase subunit C.